Reading from the N-terminus, the 247-residue chain is Ribosomal RNA large subunit methyltransferase E (247 aa).

A disordered region spans residues 1–21 (MKKTTKKTAGGYGGSGSHKLY). 5 residues coordinate S-adenosyl-L-methionine: Gly-88, Trp-90, Asp-111, Asp-127, and Asp-151. Residue Lys-191 is the Proton acceptor of the active site.

This sequence belongs to the class I-like SAM-binding methyltransferase superfamily. RNA methyltransferase RlmE family.

The protein resides in the cytoplasm. It catalyses the reaction uridine(2552) in 23S rRNA + S-adenosyl-L-methionine = 2'-O-methyluridine(2552) in 23S rRNA + S-adenosyl-L-homocysteine + H(+). Functionally, specifically methylates the uridine in position 2552 of 23S rRNA at the 2'-O position of the ribose in the fully assembled 50S ribosomal subunit. In Bartonella henselae (strain ATCC 49882 / DSM 28221 / CCUG 30454 / Houston 1) (Rochalimaea henselae), this protein is Ribosomal RNA large subunit methyltransferase E.